A 607-amino-acid chain; its full sequence is METLQGRKPKKPHYIPRPPGKPFKYQCFQCPFTCNIKSHLFNHMKYNLCKNSISLVSQRMEQTGKASRASQHSPAFSHNSKELPLDAESTKPIENVKIEKAVTKEAREKPQSPIKEVSKDDTEPALEAKDKSEDMDIAQNKISSAFSPVARTCESEALSLSPHKDDQSTIPHFYQQIAPWVTSASSAHLLPPIPEYPPYMVPERSLPPLYAPYPHNQASTPAYQVTPRETQRPLVPSPLIPPNSSLLHPYHYRYGHSIFPSPPLPYSFYQHPELSIPLQRSRYLPLDVYSSRFYPREYGGHLVPLTHPESYSRLAEDRAVQEHNTGDKGIRESPLEGCDASGSPDRPSTADVTQRIPVGLRLASHGESHSGSQSHIISGSTKANDNLPKMPCGQNQEKMLQKTERYDSQTTISSRSSDISDKEEDEETEEEIGPLNLSKRDQATSNNMTHHHYPDRELHYDSESSQEEAPLNLCLRVQSSNQALPNTSETPEKETISNAEVSTTESPQDLEPCDQRQTAAFALCQLASSRDIINDTSVKQQDVTESQNTKCLPSPDNCSVKDSPNILNASMVALGQKRANNRPLRHTNKRAKVKEPSRPRRKRSQNC.

Residues Tyr-25–Asn-51 form a CCHC-type zinc finger. Positions 27, 30, 43, and 49 each coordinate Zn(2+). The span at Met-60–His-78 shows a compositional bias: polar residues. Disordered regions lie at residues Met-60–Glu-133, Arg-318–Glu-467, Gln-482–Glu-511, and Gly-575–Cys-607. 2 stretches are compositionally biased toward basic and acidic residues: residues Asn-79–Glu-133 and Arg-318–Pro-334. Positions His-369–Ser-380 are enriched in low complexity. Over residues Asp-421–Ile-432 the composition is skewed to acidic residues. Basic and acidic residues predominate over residues His-452 to Ser-462. Residues Ile-496–Pro-507 are compositionally biased toward polar residues. A compositionally biased stretch (basic residues) spans Ala-579 to Lys-592.

The protein resides in the nucleus. Its function is as follows. Transcription factor involved in epidermis differentiation. This Danio rerio (Zebrafish) protein is Zinc finger protein 750 (znf750).